Reading from the N-terminus, the 47-residue chain is MKKFRWVALVVVVLACLLLWAQVFNMMCDQDVQFFSGICAINQFIPW.

A helical membrane pass occupies residues 6-26 (WVALVVVVLACLLLWAQVFNM).

The protein belongs to the MgrB family. As to quaternary structure, may form homooligomers. Probably interacts with the periplasmic domain of PhoQ.

Its subcellular location is the cell inner membrane. Functionally, phoP-regulated transcription is redox-sensitive, being activated when the periplasm becomes more reducing. MgrB acts between DsbA/DsbB and PhoP/PhoQ in this pathway. Represses PhoP/PhoQ signaling, possibly by binding to the periplasmic domain of PhoQ, altering its activity and that of downstream effector PhoP. The sequence is that of PhoP/PhoQ regulator MgrB from Escherichia coli O127:H6 (strain E2348/69 / EPEC).